The following is a 289-amino-acid chain: Aquaporin-2 (289 aa).

The tract at residues 1 to 36 (MSNESNDLEKNISHLDPTGVDNAYIPPEQPETKHSR) is disordered. Residues 1–47 (MSNESNDLEKNISHLDPTGVDNAYIPPEQPETKHSRFNIDRDTLRNH) lie on the Cytoplasmic side of the membrane. Residues 48-68 (FIAAVGEFCGTFMFLWCAYVI) traverse the membrane as a helical segment. Residues 69–90 (CNVANHDVALTTEPEGSHPGQL) are Extracellular-facing. Residues 91-111 (IMIALGFGFSVMFSIWCFAGV) traverse the membrane as a helical segment. Residues 112 to 135 (SGGALNPAVSLSLCLARAISPARC) lie on the Cytoplasmic side of the membrane. The short motif at 117–119 (NPA) is the NPA 1 element. Residues 136–156 (VVMWFPQIIAGMAAGGAASAM) form a helical membrane-spanning segment. The Extracellular portion of the chain corresponds to 157 to 175 (TPGKVLFTNALGLGCSRSR). A helical membrane pass occupies residues 176-196 (GLFLEMFGTAVLCLTVLMTAV). Over 197 to 202 (EKRETN) the chain is Cytoplasmic. Residues 203 to 223 (FMAALPIGISLFMAHMALTGY) form a helical membrane-spanning segment. Residues 224 to 247 (TGTGVNPARSLGAAVAARYFPHYH) are Extracellular-facing. Residues 229 to 231 (NPA) carry the NPA 2 motif. The chain crosses the membrane as a helical span at residues 248–268 (WIYWIGPLLGAFLAWSVWQLL). Over 269-289 (QILDYTTYVNAEKAAGQKKED) the chain is Cytoplasmic.

The protein belongs to the MIP/aquaporin (TC 1.A.8) family.

The protein resides in the endoplasmic reticulum membrane. Its subcellular location is the cell membrane. In terms of biological role, water channel required to facilitate the transport of water across membranes. Involved in freeze tolerance, osmotolerance and cell flocculation in liquid cultures. Is non-functional in most laboratory strains. The polypeptide is Aquaporin-2 (AQY2) (Saccharomyces cerevisiae (Baker's yeast)).